Here is a 173-residue protein sequence, read N- to C-terminus: Probable lipoprotein EnvE (173 aa).

Residues 1–20 (MTLLSGKTTLVLCLSSILCG) form the signal peptide. Cys-21 carries N-palmitoyl cysteine lipidation. Cys-21 carries the S-diacylglycerol cysteine lipid modification.

The protein resides in the cell membrane. The protein is Probable lipoprotein EnvE (envE) of Salmonella typhimurium (strain LT2 / SGSC1412 / ATCC 700720).